A 286-amino-acid polypeptide reads, in one-letter code: Beta-lactamase SHV-24 (286 aa).

The N-terminal stretch at 1–21 is a signal peptide; it reads MRYIRLCIISLLATLPLAVHA. Serine 66 acts as the Acyl-ester intermediate in catalysis. Cysteine 73 and cysteine 119 form a disulfide bridge. Residue glutamate 164 is the Proton acceptor of the active site. A substrate-binding site is contributed by 230–232; the sequence is KTG.

Belongs to the class-A beta-lactamase family.

The catalysed reaction is a beta-lactam + H2O = a substituted beta-amino acid. Functionally, hydrolyzes ampicillin. Can also hydrolyze cephaloridine, aztreonam and ceftazidime with a low catalytic rate. This is Beta-lactamase SHV-24 (bla) from Escherichia coli.